The sequence spans 1282 residues: Clustered mitochondria protein homolog (1282 aa).

The segment at 1-50 (MADASQATTPAAEGNPVPEVPETQTPPADVNGTTEQEQTEEGAEQALEDQ) is disordered. Positions 16–36 (PVPEVPETQTPPADVNGTTEQ) are enriched in low complexity. Acidic residues predominate over residues 37 to 47 (EQTEEGAEQAL). Positions 331-575 (DNTRSQETYL…RITPLDIAWM (245 aa)) constitute a Clu domain. The stretch at 623–650 (EEKKEGEEATEEAKTEEIKTEEAEKSEE) forms a coiled coil. Basic and acidic residues-rich tracts occupy residues 624–661 (EKKE…KTEE) and 668–680 (VAEK…AKED). Disordered regions lie at residues 624-680 (EKKE…AKED) and 913-945 (PVAE…TSPV). TPR repeat units lie at residues 1021 to 1054 (AQMY…AERT), 1063 to 1096 (VLNY…WKVI), and 1105 to 1138 (ITTM…CNKV). The segment at 1257–1282 (VENSEKKKGGKKSKGPSNPKKRGGKA) is disordered. Positions 1264–1282 (KGGKKSKGPSNPKKRGGKA) are enriched in basic residues.

The protein belongs to the CLU family. As to quaternary structure, may associate with the eukaryotic translation initiation factor 3 (eIF-3) complex.

The protein resides in the cytoplasm. MRNA-binding protein involved in proper cytoplasmic distribution of mitochondria. The polypeptide is Clustered mitochondria protein homolog (Neurospora crassa (strain ATCC 24698 / 74-OR23-1A / CBS 708.71 / DSM 1257 / FGSC 987)).